The sequence spans 166 residues: Protein FAM89A (166 aa).

Belongs to the FAM89 family.

This chain is Protein FAM89A (fam89a), found in Xenopus laevis (African clawed frog).